The chain runs to 713 residues: Ribosomal RNA large subunit methyltransferase K/L (713 aa).

The THUMP domain occupies Leu43 to Phe154.

This sequence belongs to the methyltransferase superfamily. RlmKL family.

It is found in the cytoplasm. The catalysed reaction is guanosine(2445) in 23S rRNA + S-adenosyl-L-methionine = N(2)-methylguanosine(2445) in 23S rRNA + S-adenosyl-L-homocysteine + H(+). It carries out the reaction guanosine(2069) in 23S rRNA + S-adenosyl-L-methionine = N(2)-methylguanosine(2069) in 23S rRNA + S-adenosyl-L-homocysteine + H(+). Its function is as follows. Specifically methylates the guanine in position 2445 (m2G2445) and the guanine in position 2069 (m7G2069) of 23S rRNA. The protein is Ribosomal RNA large subunit methyltransferase K/L of Shewanella sp. (strain ANA-3).